The primary structure comprises 103 residues: Large ribosomal subunit protein eL42 (103 aa).

2 residues coordinate Zn(2+): Cys18 and Cys21. The C4-type zinc finger occupies Cys18–Cys81. The interval Leu40–Gln62 is disordered. Positions Tyr47 to Lys57 are enriched in basic residues. Residues Cys78 and Cys81 each contribute to the Zn(2+) site.

This sequence belongs to the eukaryotic ribosomal protein eL42 family. Part of the 50S ribosomal subunit. Zn(2+) is required as a cofactor.

Binds to the 23S rRNA. This chain is Large ribosomal subunit protein eL42, found in Desulfurococcus amylolyticus (strain DSM 18924 / JCM 16383 / VKM B-2413 / 1221n) (Desulfurococcus kamchatkensis).